The following is a 243-amino-acid chain: Calcium-binding protein LPS1-beta (243 aa).

EF-hand domains lie at 15–49, 47–82, 85–120, 121–156, 157–189, 191–226, and 227–243; these read EVID…DCPE, CPEE…YTKE, YSSD…ISTK, LVEG…KLPL, CFKK…NLPG, YSEE…LSKD, and DIKN…NGKI. The Ca(2+) site is built by D29, N31, D33, T35, E40, D60, N62, D64, R66, E71, D98, D100, N102, R104, E109, D134, D136, D138, H140, E145, D167, N169, D171, S173, E178, D204, N206, D208, R210, and E215.

Aboral ectoderm, a squamous epithelium covering the surface of the late stage embryo and larva.

In terms of biological role, calcium-binding protein involved in larval development and metamorphosis. Likely to function as calcium buffers mediating the transport of calcium from the sea water to the blastocoel where calcium is required for skeleton formation. The sequence is that of Calcium-binding protein LPS1-beta from Lytechinus pictus (Painted sea urchin).